A 437-amino-acid polypeptide reads, in one-letter code: tRNA-queuosine alpha-mannosyltransferase (437 aa).

This sequence belongs to the glycosyltransferase group 1 family. Glycosyltransferase 4 subfamily.

It localises to the cytoplasm. The protein resides in the nucleus. It catalyses the reaction queuosine(34) in tRNA(Asp) + GDP-alpha-D-mannose = O-4''-alpha-D-mannosylqueuosine(34) in tRNA(Asp) + GDP + H(+). In terms of biological role, glycosyltransferase that specifically catalyzes mannosylation of cytoplasmic tRNA(Asp) modified with queuosine at position 34 (queuosine(34)). Mannosylates the cyclopentene moiety of queuosine(34) in tRNA(Asp) to form mannosyl-queuosine(34). Mannosylation of queuosine(34) in tRNA(Asp) is required to slow-down elongation at cognate codons, GAC and GAU, thereby regulating protein translation. The chain is tRNA-queuosine alpha-mannosyltransferase (gtdc1) from Xenopus laevis (African clawed frog).